The following is a 396-amino-acid chain: L-lactate dehydrogenase (396 aa).

Residues 1–380 (MIISAASDYR…SGDSLVQELG (380 aa)) enclose the FMN hydroxy acid dehydrogenase domain. Tyr24 is a substrate binding site. Positions 106 and 127 each coordinate FMN. Tyr129 contacts substrate. Thr155 lines the FMN pocket. Arg164 is a binding site for substrate. An FMN-binding site is contributed by Lys251. His275 serves as the catalytic Proton acceptor. Arg278 contributes to the substrate binding site. Residue 306–330 (DSGIRNGLDVVRMIALGADTVLLGR) coordinates FMN.

It belongs to the FMN-dependent alpha-hydroxy acid dehydrogenase family. It depends on FMN as a cofactor.

The protein resides in the cell inner membrane. The enzyme catalyses (S)-lactate + A = pyruvate + AH2. Functionally, catalyzes the conversion of L-lactate to pyruvate. Is coupled to the respiratory chain. The chain is L-lactate dehydrogenase from Salmonella typhimurium (strain LT2 / SGSC1412 / ATCC 700720).